A 1881-amino-acid chain; its full sequence is Endoribonuclease Dicer-S (1881 aa).

The Helicase ATP-binding domain maps to 41-217; it reads LLEAALDHNI…DLEEKIQNLE (177 aa). Residue 54-61 coordinates ATP; that stretch reads LNSGSGKT. The DECH box signature appears at 165-168; the sequence is DECH. Positions 425 to 594 constitute a Helicase C-terminal domain; sequence SFPSPFTNIL…SMDCGNTESE (170 aa). A Dicer dsRNA-binding fold domain is found at 622–714; sequence AIGHINRYCA…MPVGKETVKY (93 aa). Residues 887-1034 enclose the PAZ domain; it reads KFVEDIEKSE…LVPELCAIHP (148 aa). RNase III domains are found at residues 1249–1380 and 1625–1783; these read TSDI…ETSG and FENF…MDSG. Mg(2+) is bound by residues E1293, D1371, E1374, E1664, D1769, and E1772. In terms of domain architecture, DRBM spans 1808–1873; it reads VPRSPVRELL…ARRALRSLKA (66 aa).

Belongs to the helicase family. Dicer subfamily. In terms of assembly, component of the RISC loading complex (RLC), or micro-RNA (miRNA) loading complex (miRLC), which is composed of dicer1, ago2 and tarbp2; dicer1 and tarbp2 are required to process precursor miRNAs (pre-miRNAs) to mature miRNAs and then load them onto ago2. Note that the trimeric RLC/miRLC is also referred to as RISC. It depends on Mg(2+) as a cofactor. Mn(2+) serves as cofactor.

The protein localises to the cytoplasm. The enzyme catalyses Endonucleolytic cleavage to 5'-phosphomonoester.. In terms of biological role, double-stranded RNA (dsRNA) endoribonuclease playing a central role in short dsRNA-mediated post-transcriptional gene silencing. Cleaves naturally occurring long dsRNAs and short hairpin pre-microRNAs (miRNA) into fragments of twenty-one to twenty-three nucleotides with 3' overhang of two nucleotides, producing respectively short interfering RNAs (siRNA) and mature microRNAs. SiRNAs and miRNAs serve as guide to direct the RNA-induced silencing complex (RISC) to complementary RNAs to degrade them or prevent their translation. Gene silencing mediated by siRNAs, also called RNA interference, controls the elimination of transcripts from mobile and repetitive DNA elements of the genome but also the degradation of exogenous RNA of viral origin for instance. The miRNA pathway on the other side is a mean to specifically regulate the expression of target genes. During embryonic development, at the left-right organizer, post-transcriptionally regulates the expression of dand5 in flow sensor cells. In post-flow stages, acts along with Bicc1 to repress dand5 mRNA translation and decay. Decreased Dand5 expression lifts repression of Nodal and defines leftness by induction of the lateral plate mesoderm Nodal signaling cascade. This chain is Endoribonuclease Dicer-S (dicer1.S), found in Xenopus laevis (African clawed frog).